We begin with the raw amino-acid sequence, 550 residues long: Carboxypeptidase Y homolog A (550 aa).

Residues 1–18 form the signal peptide; the sequence is MKSLVLGLLVGSAIASGP. Positions 19 to 131 are excised as a propeptide; the sequence is LQHVLHAPPD…KLAQYDLRIK (113 aa). A disordered region spans residues 20–39; that stretch reads QHVLHAPPDPEPKPEPEPQV. 5 disulfide bridges follow: C185-C424, C319-C333, C343-C366, C350-C359, and C388-C394. N-linked (GlcNAc...) asparagine glycans are attached at residues N203 and N216. S272 is an active-site residue. N289 carries an N-linked (GlcNAc...) asparagine glycan. The N-linked (GlcNAc...) asparagine glycan is linked to N387. The active site involves D463. N493 and N514 each carry an N-linked (GlcNAc...) asparagine glycan. H525 is an active-site residue.

It belongs to the peptidase S10 family.

It localises to the vacuole. It catalyses the reaction Release of a C-terminal amino acid with broad specificity.. In terms of biological role, vacuolar carboxypeptidase involved in degradation of small peptides. Digests preferentially peptides containing an aliphatic or hydrophobic residue in P1' position, as well as methionine, leucine or phenylalanine in P1 position of ester substrate. This Paracoccidioides brasiliensis (strain Pb03) protein is Carboxypeptidase Y homolog A (CPYA).